The sequence spans 287 residues: MLKRIQQKWLAIKLITRMDKPIGTYLLLWPTYWALWIASDGWPNLQLLLVFSLGVFIMRSAGCVINDYADRKIDGEVERTKNRPLVNGMMTSGEAINLFGVLIGMAFGLVLMLSWSTIYLSVVAVLLAAIYPFMKRHTQLPQLFLGAAFSWGMIMAFSEAQGEIPLVAWLLFTANLCWTIAYDTMYAMVDRDDDVKIGVKSTAILFAENDKRVIGFLQLMTLALLWTVGDILAFGWPYQLCIIAAAGLFSYQQLLIVNRERDACFQAFLHNHWVGLVVFVGIAIEYL.

The next 9 helical transmembrane spans lie at Ile-22 to Trp-42, Leu-45 to Ile-65, Ala-95 to Trp-115, Ser-116 to Arg-136, Leu-140 to Ala-160, Gly-162 to Tyr-182, Ile-214 to Phe-234, Pro-237 to Val-257, and Cys-264 to Ile-284.

It belongs to the UbiA prenyltransferase family. It depends on Mg(2+) as a cofactor.

The protein resides in the cell inner membrane. It catalyses the reaction all-trans-octaprenyl diphosphate + 4-hydroxybenzoate = 4-hydroxy-3-(all-trans-octaprenyl)benzoate + diphosphate. Its pathway is cofactor biosynthesis; ubiquinone biosynthesis. Functionally, catalyzes the prenylation of para-hydroxybenzoate (PHB) with an all-trans polyprenyl group. Mediates the second step in the final reaction sequence of ubiquinone-8 (UQ-8) biosynthesis, which is the condensation of the polyisoprenoid side chain with PHB, generating the first membrane-bound Q intermediate 3-octaprenyl-4-hydroxybenzoate. In Colwellia psychrerythraea (strain 34H / ATCC BAA-681) (Vibrio psychroerythus), this protein is 4-hydroxybenzoate octaprenyltransferase.